The primary structure comprises 358 residues: Peptide chain release factor 1 (358 aa).

Residue Gln-233 is modified to N5-methylglutamine.

It belongs to the prokaryotic/mitochondrial release factor family. Methylated by PrmC. Methylation increases the termination efficiency of RF1.

The protein localises to the cytoplasm. Peptide chain release factor 1 directs the termination of translation in response to the peptide chain termination codons UAG and UAA. This is Peptide chain release factor 1 from Macrococcus caseolyticus (strain JCSC5402) (Macrococcoides caseolyticum).